The primary structure comprises 1241 residues: DNA-directed RNA polymerase subunit beta (1241 aa).

The segment at 1195–1219 is disordered; it reads PQDVQENVSGENVDAGYENEDVDID.

The protein belongs to the RNA polymerase beta chain family. In terms of assembly, the RNAP catalytic core consists of 2 alpha, 1 beta, 1 beta' and 1 omega subunit. When a sigma factor is associated with the core the holoenzyme is formed, which can initiate transcription.

It carries out the reaction RNA(n) + a ribonucleoside 5'-triphosphate = RNA(n+1) + diphosphate. Functionally, DNA-dependent RNA polymerase catalyzes the transcription of DNA into RNA using the four ribonucleoside triphosphates as substrates. This Clostridium acetobutylicum (strain ATCC 824 / DSM 792 / JCM 1419 / IAM 19013 / LMG 5710 / NBRC 13948 / NRRL B-527 / VKM B-1787 / 2291 / W) protein is DNA-directed RNA polymerase subunit beta.